The primary structure comprises 78 residues: Putative permease-like protein YdzE (78 aa).

The next 3 membrane-spanning stretches (helical) occupy residues 2-22, 27-47, and 49-69; these read YLGI…LQLL, GGLF…ILLG, and QIGG…LLVI. The region spanning 2–70 is the EamA domain; that stretch reads YLGIVSTACA…ILSGVLLVIK (69 aa).

This sequence belongs to the EamA transporter family.

The protein localises to the cell membrane. This chain is Putative permease-like protein YdzE (ydzE), found in Bacillus subtilis (strain 168).